The sequence spans 324 residues: Biotin synthase (324 aa).

The region spanning 43-273 is the Radical SAM core domain; sequence FCGNYFNFCS…HVFLRLAGGR (231 aa). Positions 61, 65, and 68 each coordinate [4Fe-4S] cluster. [2Fe-2S] cluster-binding residues include Ser105, Cys138, Cys198, and Arg268.

It belongs to the radical SAM superfamily. Biotin synthase family. As to quaternary structure, homodimer. [4Fe-4S] cluster serves as cofactor. It depends on [2Fe-2S] cluster as a cofactor.

It carries out the reaction (4R,5S)-dethiobiotin + (sulfur carrier)-SH + 2 reduced [2Fe-2S]-[ferredoxin] + 2 S-adenosyl-L-methionine = (sulfur carrier)-H + biotin + 2 5'-deoxyadenosine + 2 L-methionine + 2 oxidized [2Fe-2S]-[ferredoxin]. It participates in cofactor biosynthesis; biotin biosynthesis; biotin from 7,8-diaminononanoate: step 2/2. Its function is as follows. Catalyzes the conversion of dethiobiotin (DTB) to biotin by the insertion of a sulfur atom into dethiobiotin via a radical-based mechanism. This Campylobacter hominis (strain ATCC BAA-381 / DSM 21671 / CCUG 45161 / LMG 19568 / NCTC 13146 / CH001A) protein is Biotin synthase.